A 955-amino-acid polypeptide reads, in one-letter code: UvrABC system protein A (955 aa).

Residue 35–42 participates in ATP binding; sequence GLSGSGKS. ABC transporter domains lie at 322-601 and 621-951; these read WGST…EESI and GHDN…RYLK. 654-661 is a binding site for ATP; the sequence is GVSGSGKS. A C4-type zinc finger spans residues 754-780; that stretch reads CEACQGDGLIKIEMHFLPDVYVKCDIC.

Belongs to the ABC transporter superfamily. UvrA family. Forms a heterotetramer with UvrB during the search for lesions.

The protein resides in the cytoplasm. The UvrABC repair system catalyzes the recognition and processing of DNA lesions. UvrA is an ATPase and a DNA-binding protein. A damage recognition complex composed of 2 UvrA and 2 UvrB subunits scans DNA for abnormalities. When the presence of a lesion has been verified by UvrB, the UvrA molecules dissociate. In Rickettsia conorii (strain ATCC VR-613 / Malish 7), this protein is UvrABC system protein A.